Reading from the N-terminus, the 254-residue chain is Decaprenylphosphoryl-2-keto-beta-D-erythro-pentose reductase (254 aa).

D67 serves as a coordination point for NAD(+). Y160 acts as the Proton acceptor in catalysis. K164 contacts NAD(+).

The protein belongs to the short-chain dehydrogenases/reductases (SDR) family. In terms of assembly, interacts with DprE1 to form an epimerase complex.

It is found in the periplasm. It catalyses the reaction trans,octa-cis-decaprenylphospho-beta-D-arabinofuranose + NAD(+) = trans,octa-cis-decaprenylphospho-beta-D-erythro-pentofuranosid-2-ulose + NADH + H(+). It functions in the pathway cell wall biogenesis; cell wall polysaccharide biosynthesis. Component of the DprE1-DprE2 complex that catalyzes the 2-step epimerization of decaprenyl-phospho-ribose (DPR) to decaprenyl-phospho-arabinose (DPA), a key precursor that serves as the arabinose donor required for the synthesis of cell-wall arabinans. DprE1 catalyzes the first step of epimerization, namely FAD-dependent oxidation of the C2' hydroxyl of DPR to yield the keto intermediate decaprenyl-phospho-2'-keto-D-arabinose (DPX). The intermediate DPX is then transferred to DprE2 subunit of the epimerase complex, most probably through a 'substrate channel' at the interface of DprE1-DprE2 complex. DprE2 then catalyzes the second step of epimerization, the NAD(+)-dependent reduction of DPX that leads to the formation of DPA. The chain is Decaprenylphosphoryl-2-keto-beta-D-erythro-pentose reductase from Mycolicibacterium smegmatis (strain ATCC 700084 / mc(2)155) (Mycobacterium smegmatis).